Reading from the N-terminus, the 100-residue chain is Urease subunit gamma (100 aa).

It belongs to the urease gamma subunit family. In terms of assembly, heterotrimer of UreA (gamma), UreB (beta) and UreC (alpha) subunits. Three heterotrimers associate to form the active enzyme.

It localises to the cytoplasm. The catalysed reaction is urea + 2 H2O + H(+) = hydrogencarbonate + 2 NH4(+). The protein operates within nitrogen metabolism; urea degradation; CO(2) and NH(3) from urea (urease route): step 1/1. The chain is Urease subunit gamma from Azotobacter vinelandii (strain DJ / ATCC BAA-1303).